Here is a 48-residue protein sequence, read N- to C-terminus: Osteocalcin (48 aa).

Residues 1 to 46 (SFAVGSSYGAAPDPLEAQREVCELNPDCDELADHIGFQEAYRRFYG) enclose the Gla domain. Positions 16, 20, 23, and 29 each coordinate Ca(2+). 3 positions are modified to 4-carboxyglutamate: Glu16, Glu20, and Glu23. Residues Cys22 and Cys28 are joined by a disulfide bond.

This sequence belongs to the osteocalcin/matrix Gla protein family. Post-translationally, gamma-carboxyglutamate residues are formed by vitamin K dependent carboxylation by GGCX. These residues are essential for the binding of calcium.

It is found in the secreted. Functionally, the carboxylated form is one of the main organic components of the bone matrix, which constitutes 1-2% of the total bone protein. The carboxylated form binds strongly to apatite and calcium. The sequence is that of Osteocalcin (BGLAP) from Dromaius novaehollandiae (Emu).